The primary structure comprises 541 residues: MSDQAPSVKPPAFGPGVVVKGTWHPDYAEVLTPEALEFVAKLARNFGERRLALLERRKTVQAAWSKGARPHFLPETKAVREGDWTVAPLPADLQDRRVEITGPVDRKMVINALNSGANVFMADFEDANSPTWDNVVRGQINLRDAVRGTISFTAENGKHYALNPKRAVLFVRPRGWHLPERHIEIDGKPISGSLLDFGLFFFHNAREQLARGTGPYFYLPKMQSHLEARLWNDVFHLAQAELGIPRGTIKATVLIETLPAAFEMDEILYELREHSAGLNCGRWDYIFSFIKTLQSDTRVVLPDRGQVTMDKAFLNAYSQLLIQTCHRRNVHAMGGMAAFIPIKGDAAANDAVMDKVRADKLREVKNGHDGTWVAHPGLVEIARDIFDSHMKGPNQLSNKREDVKIGEAELLKVPSGTRTEEGLRHNIRVGIQYTAAWLGGLGCVPLYNLMEDAATAEISRAQVWQWIHHGASLEDGRKVTLTLFRDALGEEMGRLEKEGAKERYGAAHLERARVLFEQLSTAGTFEDFLTLPAYDALEAQR.

The active-site Proton acceptor is R172. The Proton donor role is filled by D452.

The protein belongs to the malate synthase family.

The protein localises to the cytoplasm. It carries out the reaction glyoxylate + acetyl-CoA + H2O = (S)-malate + CoA + H(+). Its pathway is carbohydrate metabolism; glyoxylate cycle; (S)-malate from isocitrate: step 2/2. This is Malate synthase (mls) from Myxococcus xanthus (strain DK1622).